The sequence spans 211 residues: Dephospho-CoA kinase (211 aa).

The DPCK domain maps to 3-206 (VIGLTGGIAT…GGRGRRLPNA (204 aa)). ATP is bound at residue 11–16 (ATGKST).

This sequence belongs to the CoaE family.

The protein resides in the cytoplasm. It carries out the reaction 3'-dephospho-CoA + ATP = ADP + CoA + H(+). Its pathway is cofactor biosynthesis; coenzyme A biosynthesis; CoA from (R)-pantothenate: step 5/5. Functionally, catalyzes the phosphorylation of the 3'-hydroxyl group of dephosphocoenzyme A to form coenzyme A. The sequence is that of Dephospho-CoA kinase from Anaeromyxobacter dehalogenans (strain 2CP-C).